We begin with the raw amino-acid sequence, 217 residues long: Orotidine 5'-phosphate decarboxylase (217 aa).

Substrate is bound by residues Asp14, Lys36, Asp64 to Thr73, Ser120, Pro172 to Ser182, Gly197, and Arg198. Lys66 acts as the Proton donor in catalysis.

Belongs to the OMP decarboxylase family. Type 1 subfamily. In terms of assembly, homodimer.

The enzyme catalyses orotidine 5'-phosphate + H(+) = UMP + CO2. Its pathway is pyrimidine metabolism; UMP biosynthesis via de novo pathway; UMP from orotate: step 2/2. In terms of biological role, catalyzes the decarboxylation of orotidine 5'-monophosphate (OMP) to uridine 5'-monophosphate (UMP). This Methanococcus maripaludis (strain C6 / ATCC BAA-1332) protein is Orotidine 5'-phosphate decarboxylase.